Here is a 235-residue protein sequence, read N- to C-terminus: Protein fmp52-1, mitochondrial (235 aa).

Residues 1 to 36 (MANTALIGCTGMVGSFILNNLLAHPSVARVDTISRR) constitute a mitochondrion transit peptide.

Belongs to the FMP52 family.

The protein resides in the mitochondrion outer membrane. The chain is Protein fmp52-1, mitochondrial (fmp521) from Aspergillus oryzae (strain ATCC 42149 / RIB 40) (Yellow koji mold).